The following is an 827-amino-acid chain: Villin-1 (827 aa).

The necessary for homodimerization stretch occupies residues 1–126 (MTKLNAQVKG…IRKGGVASGM (126 aa)). The interval 1 to 734 (MTKLNAQVKG…YEDLKAELGN (734 aa)) is core. One copy of the Gelsolin-like 1 repeat lies at 28–107 (QMVPVSSSTY…EVQGNESEAF (80 aa)). LPA/PIP2-binding site stretches follow at residues 112–119 (KQGIVIRK) and 138–146 (RLLHVKGKR). 2 Gelsolin-like repeats span residues 148–216 (VVAG…GEDE) and 269–342 (EVAT…SAVF). At S366 the chain carries Phosphoserine. Gelsolin-like repeat units follow at residues 409 to 489 (DLVP…PHLM), 528 to 595 (TKAF…ANFW), and 634 to 707 (TEIP…PPTF). Position 735 is a phosphoserine (S735). The HP domain occupies 761–827 (SGPLPIFPLE…QNLKKEKGLF (67 aa)). Residues 816–824 (KQQNLKKEK) form an LPA/PIP2-binding site 3 region.

It belongs to the villin/gelsolin family. Monomer. Homodimer; homodimerization is necessary for actin-bundling. Associates with F-actin; phosphorylation at tyrosine residues decreases the association with F-actin. Interacts (phosphorylated at C-terminus tyrosine phosphorylation sites) with PLCG1 (via the SH2 domains). Interacts (phosphorylated form) with PLCG1; the interaction is enhanced by hepatocyte growth factor (HGF). Phosphorylated on tyrosine residues by SRC. The unphosphorylated form increases the initial rate of actin-nucleating activity, whereas the tyrosine-phosphorylated form inhibits actin-nucleating activity, enhances actin-bundling activity and enhances actin-severing activity by reducing high Ca(2+) requirements. The tyrosine-phosphorylated form does not regulate actin-capping activity. Tyrosine phosphorylation is essential for cell migration: tyrosine phosphorylation sites in the N-terminus half regulate actin reorganization and cell morphology, whereas tyrosine phosphorylation sites in the C-terminus half regulate cell migration. Tyrosine phosphorylation is induced by epidermal growth factor (EGF) and stimulates cell migration.

It localises to the cytoplasm. The protein resides in the cytoskeleton. Its subcellular location is the cell projection. It is found in the lamellipodium. The protein localises to the ruffle. It localises to the microvillus. The protein resides in the filopodium tip. Its subcellular location is the filopodium. Its function is as follows. Epithelial cell-specific Ca(2+)-regulated actin-modifying protein that modulates the reorganization of microvillar actin filaments. Plays a role in the actin nucleation, actin filament bundle assembly, actin filament capping and severing. Binds phosphatidylinositol 4,5-bisphosphate (PIP2) and lysophosphatidic acid (LPA); binds LPA with higher affinity than PIP2. Binding to LPA increases its phosphorylation by SRC and inhibits all actin-modifying activities. Binding to PIP2 inhibits actin-capping and -severing activities but enhances actin-bundling activity. Regulates the intestinal epithelial cell morphology, cell invasion, cell migration and apoptosis. Protects against apoptosis induced by dextran sodium sulfate (DSS) in the gastrointestinal epithelium. Appears to regulate cell death by maintaining mitochondrial integrity. Enhances hepatocyte growth factor (HGF)-induced epithelial cell motility, chemotaxis and wound repair. This is Villin-1 (VIL1) from Sus scrofa (Pig).